The following is a 398-amino-acid chain: Acetate kinase (398 aa).

A Mg(2+)-binding site is contributed by N7. An ATP-binding site is contributed by K14. Position 91 (R91) interacts with substrate. Catalysis depends on D148, which acts as the Proton donor/acceptor. ATP is bound by residues 208-212 (HIGNG), 283-285 (DMR), and 331-335 (GVGEN). Mg(2+) is bound at residue E385.

This sequence belongs to the acetokinase family. As to quaternary structure, homodimer. Requires Mg(2+) as cofactor. Mn(2+) serves as cofactor.

Its subcellular location is the cytoplasm. It carries out the reaction acetate + ATP = acetyl phosphate + ADP. Its pathway is metabolic intermediate biosynthesis; acetyl-CoA biosynthesis; acetyl-CoA from acetate: step 1/2. In terms of biological role, catalyzes the formation of acetyl phosphate from acetate and ATP. Can also catalyze the reverse reaction. The polypeptide is Acetate kinase (Porphyromonas gingivalis (strain ATCC BAA-308 / W83)).